A 623-amino-acid chain; its full sequence is Putative chaperone protein ClpB2, chloroplastic (623 aa).

Residues 1–123 enclose the Clp R domain; it reads MNDLKFDPNV…KSEVEKLRGE (123 aa). Repeat regions lie at residues 6–71 and 77–123; these read FDPN…NQSL and RNLG…LRGE. The i stretch occupies residues 129–375; sequence LKTYGTDLVE…HVKAQLDIQP (247 aa). 172–179 serves as a coordination point for ATP; that stretch reads GEPGVGKT. The stretch at 368-462 forms a coiled coil; that stretch reads KAQLDIQPEE…LQEAERQHDV (95 aa). 571–578 lines the ATP pocket; sequence GPTGVGKT.

It belongs to the ClpA/ClpB family.

This chain is Putative chaperone protein ClpB2, chloroplastic (CLPB2), found in Arabidopsis thaliana (Mouse-ear cress).